A 61-amino-acid polypeptide reads, in one-letter code: Small ribosomal subunit protein uS14B (61 aa).

Zn(2+)-binding residues include Cys-24, Cys-27, Cys-40, and Cys-43.

The protein belongs to the universal ribosomal protein uS14 family. Zinc-binding uS14 subfamily. Part of the 30S ribosomal subunit. Contacts proteins S3 and S10. Zn(2+) is required as a cofactor.

Its function is as follows. Binds 16S rRNA, required for the assembly of 30S particles and may also be responsible for determining the conformation of the 16S rRNA at the A site. The protein is Small ribosomal subunit protein uS14B of Mycobacterium ulcerans (strain Agy99).